Here is a 60-residue protein sequence, read N- to C-terminus: Bowman-Birk type proteinase inhibitor C1 (60 aa).

Intrachain disulfides connect Cys-5–Cys-21, Cys-11–Cys-19, Cys-28–Cys-35, and Cys-32–Cys-49.

The protein belongs to the Bowman-Birk serine protease inhibitor family. In terms of tissue distribution, expressed in bulb (at protein level).

Serine protease inhibitor. Strongly inhibits trypsin (Ki = 0.22 nM) and very weakly inhibits chymotrypsin (Ki = 1200 nM). Does not inhibit bacterial subtilisin. The polypeptide is Bowman-Birk type proteinase inhibitor C1 (Hyacinthus orientalis (Common hyacinth)).